A 254-amino-acid polypeptide reads, in one-letter code: uncharacterized protein (254 aa).

NADP(+) is bound by residues Ile-18, Ser-37, Asp-63, Asn-90, Tyr-159, Lys-163, Val-192, and Thr-194. The active-site Proton donor is the Tyr-159. The Lowers pKa of active site Tyr role is filled by Lys-163.

Belongs to the short-chain dehydrogenases/reductases (SDR) family.

Its subcellular location is the cytoplasm. It is found in the nucleus. This is an uncharacterized protein from Schizosaccharomyces pombe (strain 972 / ATCC 24843) (Fission yeast).